The primary structure comprises 334 residues: Succinylglutamate desuccinylase (334 aa).

Zn(2+) contacts are provided by His-59, Glu-62, and His-151. Residue Glu-215 is part of the active site.

The protein belongs to the AspA/AstE family. Succinylglutamate desuccinylase subfamily. Zn(2+) is required as a cofactor.

The catalysed reaction is N-succinyl-L-glutamate + H2O = L-glutamate + succinate. The protein operates within amino-acid degradation; L-arginine degradation via AST pathway; L-glutamate and succinate from L-arginine: step 5/5. Its function is as follows. Transforms N(2)-succinylglutamate into succinate and glutamate. The polypeptide is Succinylglutamate desuccinylase (Pseudomonas fluorescens (strain SBW25)).